A 102-amino-acid chain; its full sequence is Co-chaperonin GroES (102 aa).

It belongs to the GroES chaperonin family. Heptamer of 7 subunits arranged in a ring. Interacts with the chaperonin GroEL.

The protein resides in the cytoplasm. Together with the chaperonin GroEL, plays an essential role in assisting protein folding. The GroEL-GroES system forms a nano-cage that allows encapsulation of the non-native substrate proteins and provides a physical environment optimized to promote and accelerate protein folding. GroES binds to the apical surface of the GroEL ring, thereby capping the opening of the GroEL channel. In Streptomyces griseus subsp. griseus (strain JCM 4626 / CBS 651.72 / NBRC 13350 / KCC S-0626 / ISP 5235), this protein is Co-chaperonin GroES.